The chain runs to 147 residues: Large ribosomal subunit protein bL9 (147 aa).

It belongs to the bacterial ribosomal protein bL9 family.

Functionally, binds to the 23S rRNA. The chain is Large ribosomal subunit protein bL9 from Caldanaerobacter subterraneus subsp. tengcongensis (strain DSM 15242 / JCM 11007 / NBRC 100824 / MB4) (Thermoanaerobacter tengcongensis).